A 143-amino-acid chain; its full sequence is Glutamate-rich protein 4 (143 aa).

A compositionally biased stretch (acidic residues) spans 90–106; sequence LEEEEEDDDEEEQEEEG. Residues 90–143 are disordered; it reads LEEEEEDDDEEEQEEEGEGKNCVEENKGLQGKQGEKCSGNPYPAQRLPDFEMTI. Positions 107–116 are enriched in basic and acidic residues; the sequence is EGKNCVEENK.

This is Glutamate-rich protein 4 (Erich4) from Rattus norvegicus (Rat).